We begin with the raw amino-acid sequence, 179 residues long: Large ribosomal subunit protein uL6 (179 aa).

This sequence belongs to the universal ribosomal protein uL6 family. In terms of assembly, part of the 50S ribosomal subunit.

In terms of biological role, this protein binds to the 23S rRNA, and is important in its secondary structure. It is located near the subunit interface in the base of the L7/L12 stalk, and near the tRNA binding site of the peptidyltransferase center. The protein is Large ribosomal subunit protein uL6 of Acaryochloris marina (strain MBIC 11017).